A 345-amino-acid chain; its full sequence is Uroporphyrinogen decarboxylase (345 aa).

Substrate contacts are provided by residues 27-31 (RQAGR), Phe-46, Asp-76, Tyr-152, Ser-207, and His-320.

Belongs to the uroporphyrinogen decarboxylase family. As to quaternary structure, homodimer.

It is found in the cytoplasm. The enzyme catalyses uroporphyrinogen III + 4 H(+) = coproporphyrinogen III + 4 CO2. Its pathway is porphyrin-containing compound metabolism; protoporphyrin-IX biosynthesis; coproporphyrinogen-III from 5-aminolevulinate: step 4/4. In terms of biological role, catalyzes the decarboxylation of four acetate groups of uroporphyrinogen-III to yield coproporphyrinogen-III. In Geobacillus thermodenitrificans (strain NG80-2), this protein is Uroporphyrinogen decarboxylase.